The following is a 132-amino-acid chain: DNA-directed RNA polymerase subunit omega (132 aa).

The interval 100–119 is disordered; that stretch reads VSAEEEASHGTAGMSAEELE.

It belongs to the RNA polymerase subunit omega family. As to quaternary structure, the RNAP catalytic core consists of 2 alpha, 1 beta, 1 beta' and 1 omega subunit. When a sigma factor is associated with the core the holoenzyme is formed, which can initiate transcription.

It carries out the reaction RNA(n) + a ribonucleoside 5'-triphosphate = RNA(n+1) + diphosphate. Functionally, promotes RNA polymerase assembly. Latches the N- and C-terminal regions of the beta' subunit thereby facilitating its interaction with the beta and alpha subunits. The polypeptide is DNA-directed RNA polymerase subunit omega (Gluconacetobacter diazotrophicus (strain ATCC 49037 / DSM 5601 / CCUG 37298 / CIP 103539 / LMG 7603 / PAl5)).